A 242-amino-acid chain; its full sequence is Ribosomal RNA small subunit methyltransferase G (242 aa).

S-adenosyl-L-methionine is bound by residues Gly79, Phe84, 130-131 (AE), and Arg150.

This sequence belongs to the methyltransferase superfamily. RNA methyltransferase RsmG family.

Its subcellular location is the cytoplasm. Its function is as follows. Specifically methylates the N7 position of a guanine in 16S rRNA. This chain is Ribosomal RNA small subunit methyltransferase G, found in Levilactobacillus brevis (strain ATCC 367 / BCRC 12310 / CIP 105137 / JCM 1170 / LMG 11437 / NCIMB 947 / NCTC 947) (Lactobacillus brevis).